Reading from the N-terminus, the 48-residue chain is Small polypeptide DEVIL 19 (48 aa).

The tract at residues 13-44 (AFTSKCVSLVKEQRARLYILRRCATMLCCWYI) is required for DVL/RTFL small polypeptide activity. Residues 25–42 (QRARLYILRRCATMLCCW) traverse the membrane as a helical segment.

Belongs to the DVL/RTFL small polypeptides family.

It is found in the cell membrane. In terms of biological role, small polypeptide acting as a regulatory molecule which coordinates cellular responses required for differentiation, growth and development, probably by restricting polar cell proliferation in lateral organs and coordinating socket cell recruitment and differentiation at trichome sites. This is Small polypeptide DEVIL 19 from Arabidopsis thaliana (Mouse-ear cress).